We begin with the raw amino-acid sequence, 1289 residues long: Trafficking protein particle complex II-specific subunit 120 (1289 aa).

Positions 354-365 (STGISPVDSNSK) are enriched in polar residues. Residues 354-374 (STGISPVDSNSKATASTTASS) are disordered. 2 positions are modified to phosphoserine: serine 379 and serine 387.

Belongs to the TRS120 family. As to quaternary structure, part of the multisubunit TRAPP (transport protein particle) II complex composed of BET3, BET5, TRS20, TRS23, TRS31, TRS33, TRS65, TRS120 and TRS130. Interacts directly with TRS65.

The protein localises to the golgi apparatus. Its subcellular location is the cis-Golgi network. In terms of biological role, specific subunit of the TRAPP II complex, a highly conserved vesicle tethering complex that functions in the late Golgi as a guanine nucleotide exchanger (GEF) for the Golgi YPT1 GTPase. TRS120 plays a role in the YPT GEF activity of TRAPP II in concert with the two other TRAPP II-specific subunits TRS65 and TRS130. The chain is Trafficking protein particle complex II-specific subunit 120 (TRS120) from Saccharomyces cerevisiae (strain ATCC 204508 / S288c) (Baker's yeast).